Here is a 372-residue protein sequence, read N- to C-terminus: Galanin receptor type 2 (372 aa).

The Extracellular segment spans residues 1–28 (MNGSGSQGAENTSQEGGSGGWQPEAVLV). Residues Asn-2 and Asn-11 are each glycosylated (N-linked (GlcNAc...) asparagine). Residues 29 to 49 (PLFFALIFLVGTVGNALVLAV) traverse the membrane as a helical segment. Topologically, residues 50 to 60 (LLRGGQAVSTT) are cytoplasmic. Residues 61–81 (NLFILNLGVADLCFILCCVPF) form a helical membrane-spanning segment. Over 82–99 (QATIYTLDDWVFGSLLCK) the chain is Extracellular. Cys-98 and Cys-175 are joined by a disulfide. The helical transmembrane segment at 100-121 (AVHFLIFLTMHASSFTLAAVSL) threads the bilayer. At 122–141 (DRYLAIRYPLHSRELRTPRN) the chain is on the cytoplasmic side. Residues 142 to 162 (ALAAIGLIWGLALLFSGPYLS) traverse the membrane as a helical segment. Residues 163–187 (YYRQSQLANLTVCHPAWSAPRRRAM) lie on the Extracellular side of the membrane. The helical transmembrane segment at 188-208 (DLCTFVFSYLLPVLVLSLTYA) threads the bilayer. Over 209-237 (RTLRYLWRTVDPVTAGSGSQRAKRKVTRM) the chain is Cytoplasmic. A helical membrane pass occupies residues 238 to 258 (IIIVAVLFCLCWMPHHALILC). Residues 259 to 260 (VW) lie on the Extracellular side of the membrane. Residues 261–281 (FGRFPLTRATYALRILSHLVS) form a helical membrane-spanning segment. Topologically, residues 282-372 (YANSCVNPIV…ASSRTLDPAC (91 aa)) are cytoplasmic. The segment at 353-372 (VPPPALPNCTASSRTLDPAC) is disordered. Polar residues predominate over residues 361-372 (CTASSRTLDPAC).

It belongs to the G-protein coupled receptor 1 family.

The protein resides in the cell membrane. Receptor for the hormone galanin, GALP and spexin-1. The activity of this receptor is mediated by G proteins that activate the phospholipase C/protein kinase C pathway (via G(q)) and that inhibit adenylyl cyclase (via G(i)). This Rattus norvegicus (Rat) protein is Galanin receptor type 2 (Galr2).